A 255-amino-acid polypeptide reads, in one-letter code: Testis-specific H1 histone (255 aa).

The segment at Met1–Ser54 is disordered. Position 56 is a phosphoserine (Ser56). The span at Lys124–Arg134 shows a compositional bias: basic residues. The interval Lys124–Gln255 is disordered. Positions Arg142 to Arg152 are enriched in low complexity. 2 stretches are compositionally biased toward basic residues: residues Ser153 to Arg166 and Arg174 to Pro194. Composition is skewed to basic and acidic residues over residues Arg195–Gly230 and Lys238–Lys248.

Belongs to the histone H1/H5 family. Testis-specific.

It localises to the nucleus. It is found in the chromosome. Functionally, essential for normal spermatogenesis and male fertility. Required for proper cell restructuring and DNA condensation during the elongation phase of spermiogenesis. Involved in the histone-protamine transition of sperm chromatin and the subsequent production of functional sperm. Binds both double-stranded and single-stranded DNA, ATP and protamine-1. The chain is Testis-specific H1 histone from Homo sapiens (Human).